Here is a 396-residue protein sequence, read N- to C-terminus: Anticodon nuclease (396 aa).

Anticodon endonuclease (ACNase) that triggers the cleavage ligation of tRNA(Lys). It is activated by T4 stp protein and masked by the prrD protein (the endonuclease subunit of EcoprrI). The prr locus restricts phage T4 mutants lacking polynucleotide kinase or RNA ligase; T4 mutants lacking these genes manifest a T4-induced anticodon nuclease (ACNase). It is thought that Stp and other T4-encoded ACNase factors counteract the masking agents, thus activating the latent ACNase. The protein is Anticodon nuclease of Escherichia coli.